We begin with the raw amino-acid sequence, 284 residues long: Lipoyl synthase (284 aa).

7 residues coordinate [4Fe-4S] cluster: Cys36, Cys41, Cys47, Cys62, Cys66, Cys69, and Ser273. A Radical SAM core domain is found at 48 to 262 (WGKGTATFMI…RTIGLKKGFR (215 aa)).

This sequence belongs to the radical SAM superfamily. Lipoyl synthase family. [4Fe-4S] cluster serves as cofactor.

Its subcellular location is the cytoplasm. It catalyses the reaction [[Fe-S] cluster scaffold protein carrying a second [4Fe-4S](2+) cluster] + N(6)-octanoyl-L-lysyl-[protein] + 2 oxidized [2Fe-2S]-[ferredoxin] + 2 S-adenosyl-L-methionine + 4 H(+) = [[Fe-S] cluster scaffold protein] + N(6)-[(R)-dihydrolipoyl]-L-lysyl-[protein] + 4 Fe(3+) + 2 hydrogen sulfide + 2 5'-deoxyadenosine + 2 L-methionine + 2 reduced [2Fe-2S]-[ferredoxin]. It participates in protein modification; protein lipoylation via endogenous pathway; protein N(6)-(lipoyl)lysine from octanoyl-[acyl-carrier-protein]: step 2/2. Functionally, catalyzes the radical-mediated insertion of two sulfur atoms into the C-6 and C-8 positions of the octanoyl moiety bound to the lipoyl domains of lipoate-dependent enzymes, thereby converting the octanoylated domains into lipoylated derivatives. In Phocaeicola vulgatus (strain ATCC 8482 / DSM 1447 / JCM 5826 / CCUG 4940 / NBRC 14291 / NCTC 11154) (Bacteroides vulgatus), this protein is Lipoyl synthase.